Consider the following 667-residue polypeptide: Sterile alpha motif domain-containing protein 15 (667 aa).

A compositionally biased stretch (acidic residues) spans 1–18; the sequence is MAEVPEDYDSGPDEDGEP. 2 disordered regions span residues 1–108 and 147–424; these read MAEV…KSER and SAME…IKSK. Composition is skewed to basic and acidic residues over residues 19–53, 84–93, 187–196, and 228–266; these read ESER…HEPQ, IAKESKRDVP, ESLRVQHEET, and TKPD…KSSE. The segment covering 268–277 has biased composition (acidic residues); the sequence is AGLEPPEETQ. 4 stretches are compositionally biased toward basic and acidic residues: residues 284–314, 322–338, 346–364, and 381–422; these read MQRK…KSTD, EEIK…KPNE, EMMK…EEKN, and PRVE…EPIK. One can recognise an SAM domain in the interval 538-601; sequence WDPEKVAEWI…SRHTRELLEI (64 aa).

In Macaca fascicularis (Crab-eating macaque), this protein is Sterile alpha motif domain-containing protein 15 (SAMD15).